The primary structure comprises 130 residues: Protein ApaG (130 aa).

The ApaG domain maps to 3–127 (RALTKDIEVV…FSLDSPGLLR (125 aa)).

This is Protein ApaG from Rhizobium leguminosarum bv. trifolii (strain WSM2304).